Reading from the N-terminus, the 835-residue chain is MGILNKIFGTYSERELRRVNPIVNKIEALDEKMQSLKDEDFKLKTEEFKSRLEKGEKLDDILPEAFALVREAAHRTIGLKHYREQLIGGVVLHQGRIGEMKTGEGKTLVATLPAYVNALTGEGVHIVTVNDYLAKRDRDLMAPVYEFLGLKVGVILHNLNNEERQEAYGSDITYGTNSEFGFDYLRDNMVVYKEERVQRKLNFSIVDEVDSILIDEARTPLIISGQGEKSTEFYKVADYFTKSLIAEKDFTIDEKANSAMLTDEGVNKAENFFKVDNYADAENMEIQHHVVQALKANYVMKKDKDYMIKDGEILIVDEFTGRAMEGRRYSDGLHQAIEAKEGVRVERESKTLATITYQNYFRMYNKLSGMTGTAQTEENEFREIYGLDVIVIPTHEPIARIDNADVVYKSEKGKFKAIVDEIVERYKKGQPMLVGTVSIEKSEMLSSMLKKKGVPHQVLNAKYHEKEAEIISHAGEYGMVTIATNMAGRGTDIKLTKEAEEAGGLMIIGTERHESRRIDNQLRGRSGRQGDPGESRFFVSLEDDLMRIFGSERIQGIVDKLGLAEDEAIESKMVSSAIESAQKKVEGNNFDIRKTLLQYDDVINKQREIIYKQRSEVLEGEDLKDQIRDMIRDVAYTAVNSHISGVEEEFETELQNLVNYLEDICLPKALVKVKDISNLSDEEIKEKLLEAVENIYSNKEKEIGEEQIREIERVILLRVVDTKWMDHIDDMDHLKQGIGLRAYRQQDPVQAYQFEGSEMFEEMIYNIKVDTVRYLFHVEIEKAPEREKVAKETSTNYDEDSVKKQPIKKENRIGRNDMCPCGSGKKYKNCCGRMA.

Residues Gln85, 103–107, and Asp492 each bind ATP; that span reads GEGKT. Cys819, Cys821, Cys830, and Cys831 together coordinate Zn(2+).

This sequence belongs to the SecA family. As to quaternary structure, monomer and homodimer. Part of the essential Sec protein translocation apparatus which comprises SecA, SecYEG and auxiliary proteins SecDF. Other proteins may also be involved. Zn(2+) is required as a cofactor.

It localises to the cell membrane. The protein localises to the cytoplasm. It carries out the reaction ATP + H2O + cellular proteinSide 1 = ADP + phosphate + cellular proteinSide 2.. Functionally, part of the Sec protein translocase complex. Interacts with the SecYEG preprotein conducting channel. Has a central role in coupling the hydrolysis of ATP to the transfer of proteins into and across the cell membrane, serving as an ATP-driven molecular motor driving the stepwise translocation of polypeptide chains across the membrane. This Clostridium botulinum (strain Okra / Type B1) protein is Protein translocase subunit SecA.